The primary structure comprises 472 residues: UDP-glycosyltransferase 2 (472 aa).

Residues serine 283, 348–349, 366–374, and 388–391 each bind UDP-alpha-D-glucose; these read WA, HCGWNSVLE, and YAEQ.

Belongs to the UDP-glycosyltransferase family. As to expression, highly expressed in roots. Expressed in leaves and stems.

Its function is as follows. Glycosyltransferase that possesses isoflavonoids 4'-O- and 7-O-glucosyltransferase activities. Shows a successive glucosylation toward the acceptors producing their corresponding 4',7-O-diglucosides. Can use genistein, formononetin, daidzein, liquiritigenin and naringenin as substrates. Also shows a 3'-O-glucosylation activity in vitro. The polypeptide is UDP-glycosyltransferase 2 (Pueraria montana var. lobata (Kudzu vine)).